The primary structure comprises 189 residues: Parkinson disease protein 7 homolog (189 aa).

The residue at position 2 (Ala2) is an N-acetylalanine. S-palmitoyl cysteine attachment occurs at residues Cys46 and Cys53. Tyr67 is modified (phosphotyrosine). Cys106 acts as the Nucleophile in catalysis. A Cysteine sulfinic acid (-SO2H); alternate modification is found at Cys106. Residue Cys106 is the site of S-palmitoyl cysteine; alternate attachment. His126 is an active-site residue. Lys130 is covalently cross-linked (Glycyl lysine isopeptide (Lys-Gly) (interchain with G-Cter in SUMO)). An N6-acetyllysine modification is found at Lys148. Lys182 is modified (N6-succinyllysine).

The protein belongs to the peptidase C56 family. As to quaternary structure, homodimer. Binds EFCAB6/DJBP and PIAS2. Part of a ternary complex containing PARK7, EFCAB6/DJBP and AR. Binds to HIPK1. Interacts (via N-terminus) with OTUD7B. Interacts with BBS1, CLCF1 and MTERF. Interacts (via C-terminus) with NCF1; the interaction is enhanced by LPS and modulates NCF1 phosphorylation and membrane translocation. Interacts with NENF. The cofactor is Deglycase activity does not require glutathione as a cofactor, however, glycated glutathione constitutes a PARK7 substrate.. Post-translationally, sumoylated on Lys-130 by PIAS2 or PIAS4; which is essential for cell-growth promoting activity and transforming activity. Undergoes cleavage of a C-terminal peptide and subsequent activation of protease activity in response to oxidative stress. In terms of tissue distribution, expressed in erythroblasts and in mature red blood cells from peripheral blood (at protein level). In pancreas, expression is higher in islets than surrounding exocrine tissues.

The protein localises to the cell membrane. It is found in the cytoplasm. The protein resides in the membrane raft. Its subcellular location is the nucleus. It localises to the mitochondrion. The protein localises to the endoplasmic reticulum. It catalyses the reaction N(omega)-(1-hydroxy-2-oxopropyl)-L-arginyl-[protein] + H2O = lactate + L-arginyl-[protein] + H(+). The catalysed reaction is N(6)-(1-hydroxy-2-oxopropyl)-L-lysyl-[protein] + H2O = lactate + L-lysyl-[protein] + H(+). It carries out the reaction S-(1-hydroxy-2-oxopropyl)-L-cysteinyl-[protein] + H2O = lactate + L-cysteinyl-[protein] + H(+). The enzyme catalyses N(omega)-(1-hydroxy-2-oxoethyl)-L-arginyl-[protein] + H2O = L-arginyl-[protein] + glycolate + H(+). It catalyses the reaction N(6)-(1-hydroxy-2-oxoethyl)-L-lysyl-[protein] + H2O = glycolate + L-lysyl-[protein] + H(+). The catalysed reaction is S-(1-hydroxy-2-oxoethyl)-L-cysteinyl-[protein] + H2O = glycolate + L-cysteinyl-[protein] + H(+). It carries out the reaction N(2)-(1-hydroxy-2-oxopropyl)-dGTP + H2O = lactate + dGTP + H(+). The enzyme catalyses N(2)-(1-hydroxy-2-oxopropyl)-GTP + H2O = lactate + GTP + H(+). It catalyses the reaction N(2)-(1-hydroxy-2-oxopropyl)-GDP + H2O = lactate + GDP + H(+). The catalysed reaction is N(2)-(1-hydroxy-2-oxopropyl)-GMP + H2O = lactate + GMP + H(+). It carries out the reaction N(2)-(1-hydroxy-2-oxoethyl)-dGTP + H2O = dGTP + glycolate + H(+). The enzyme catalyses N(2)-(1-hydroxy-2-oxoethyl)-GTP + H2O = glycolate + GTP + H(+). It catalyses the reaction N(2)-(1-hydroxy-2-oxoethyl)-GDP + H2O = glycolate + GDP + H(+). The catalysed reaction is N(2)-(1-hydroxy-2-oxoethyl)-GMP + H2O = glycolate + GMP + H(+). It carries out the reaction an N(2)-(1-hydroxy-2-oxopropyl)-guanosine in RNA + H2O = a guanosine in RNA + lactate + H(+). The enzyme catalyses an N(2)-(1-hydroxy-2-oxopropyl)-2'-deoxyguanosine in DNA + H2O = a 2'-deoxyguanosine in DNA + lactate + H(+). It catalyses the reaction an N(2)-(1-hydroxy-2-oxoethyl)-guanosine in RNA + H2O = a guanosine in RNA + glycolate + H(+). The catalysed reaction is an N(2)-(1-hydroxy-2-oxoethyl)-2'-deoxyguanosine in DNA + H2O = a 2'-deoxyguanosine in DNA + glycolate + H(+). Functionally, multifunctional protein with controversial molecular function which plays an important role in cell protection against oxidative stress and cell death acting as oxidative stress sensor and redox-sensitive chaperone and protease. It is involved in neuroprotective mechanisms like the stabilization of NFE2L2 and PINK1 proteins, male fertility as a positive regulator of androgen signaling pathway as well as cell growth and transformation through, for instance, the modulation of NF-kappa-B signaling pathway. Has been described as a protein and nucleotide deglycase that catalyzes the deglycation of the Maillard adducts formed between amino groups of proteins or nucleotides and reactive carbonyl groups of glyoxals. But this function is rebuted by other works. As a protein deglycase, repairs methylglyoxal- and glyoxal-glycated proteins, and releases repaired proteins and lactate or glycolate, respectively. Deglycates cysteine, arginine and lysine residues in proteins, and thus reactivates these proteins by reversing glycation by glyoxals. Acts on early glycation intermediates (hemithioacetals and aminocarbinols), preventing the formation of advanced glycation endproducts (AGE) that cause irreversible damage. Also functions as a nucleotide deglycase able to repair glycated guanine in the free nucleotide pool (GTP, GDP, GMP, dGTP) and in DNA and RNA. Is thus involved in a major nucleotide repair system named guanine glycation repair (GG repair), dedicated to reversing methylglyoxal and glyoxal damage via nucleotide sanitization and direct nucleic acid repair. Protects histones from adduction by methylglyoxal, controls the levels of methylglyoxal-derived argininine modifications on chromatin. Able to remove the glycations and restore histone 3, histone glycation disrupts both local and global chromatin architecture by altering histone-DNA interactions as well as histone acetylation and ubiquitination levels. Displays a very low glyoxalase activity that may reflect its deglycase activity. Eliminates hydrogen peroxide and protects cells against hydrogen peroxide-induced cell death. Required for correct mitochondrial morphology and function as well as for autophagy of dysfunctional mitochondria. Plays a role in regulating expression or stability of the mitochondrial uncoupling proteins SLC25A14 and SLC25A27 in dopaminergic neurons of the substantia nigra pars compacta and attenuates the oxidative stress induced by calcium entry into the neurons via L-type channels during pacemaking. Regulates astrocyte inflammatory responses, may modulate lipid rafts-dependent endocytosis in astrocytes and neuronal cells. In pancreatic islets, involved in the maintenance of mitochondrial reactive oxygen species (ROS) levels and glucose homeostasis in an age- and diet dependent manner. Protects pancreatic beta cells from cell death induced by inflammatory and cytotoxic setting. Binds to a number of mRNAs containing multiple copies of GG or CC motifs and partially inhibits their translation but dissociates following oxidative stress. Metal-binding protein able to bind copper as well as toxic mercury ions, enhances the cell protection mechanism against induced metal toxicity. In macrophages, interacts with the NADPH oxidase subunit NCF1 to direct NADPH oxidase-dependent ROS production, and protects against sepsis. This is Parkinson disease protein 7 homolog from Mus musculus (Mouse).